The following is a 325-amino-acid chain: DNA-directed RNA polymerase subunit alpha (325 aa).

Residues 1 to 238 (MSLKSLLKGF…EHLTVFINFE (238 aa)) form an alpha N-terminal domain (alpha-NTD) region. The interval 254-325 (KLKASLSKHV…LGLSFGMRDF (72 aa)) is alpha C-terminal domain (alpha-CTD).

Belongs to the RNA polymerase alpha chain family. Homodimer. The RNAP catalytic core consists of 2 alpha, 1 beta, 1 beta' and 1 omega subunit. When a sigma factor is associated with the core the holoenzyme is formed, which can initiate transcription.

It catalyses the reaction RNA(n) + a ribonucleoside 5'-triphosphate = RNA(n+1) + diphosphate. Its function is as follows. DNA-dependent RNA polymerase catalyzes the transcription of DNA into RNA using the four ribonucleoside triphosphates as substrates. This Leptospira borgpetersenii serovar Hardjo-bovis (strain JB197) protein is DNA-directed RNA polymerase subunit alpha.